We begin with the raw amino-acid sequence, 23 residues long: Aldehyde dehydrogenase (23 aa).

It belongs to the aldehyde dehydrogenase family.

It carries out the reaction an aldehyde + NAD(+) + H2O = a carboxylate + NADH + 2 H(+). This is Aldehyde dehydrogenase from Moraxella sp. (strain TAE123).